Here is a 735-residue protein sequence, read N- to C-terminus: MHCGLLEEPDMDSTESWIERCLNESESKRFSSHSSIGNISNDENEEKENNRASKPHSTPATLQWLEENYEIAEGVCIPRSALYMHYLDFCEKLDSQPVNAASFGKIIRQQFPQLTTRRLGTRGQSKYHYYGIAVKESSQYYDVMYSKKGAAWVNETGKKEVTKQTVAYSPRSKLGTLLPDFPNVKDLNLPASLPEEKVSTFIMMYRTHCQRILDTVIRANFDEVQSFLLHFWQGMPPHMLPVLGSSTVVNIVGVCDSILYKAISGVLMPTVLQALPDSLTQVIRKFAKQLDEWLKVALHDLPENLRNIKFELSRRFSQILKRQTSLNHLCQASRTVIHSADITFQMLEDWRNVDLNSITKQTLYTMEDSREDQRRLIIQLYQEFDRLLEDQSPIEAYIEWLDSMVERCVVRVAGKRPGSLKRVAQQFLLMWSCFGTRVIRDMTLHSAPSFGSFHLIHLMFDDYVLYLLESLHCQERANELMRAMKGEGAPADTGEELMLMSSTPTSTSPAPYSPAKSVHSVGVPAVGSPNSAQSPEYTSISATTGAVQSYTWSLTYTVTTSGGSPTEPGSQLSCMRGGPALHGSSSAHRMPVYPHRDEHGYTGSYNYSSYANQHHHAIQSQYSSLTHEAGLPTPLHYSSYHRTSAQYPLNSQMSRMESCLMSGSPLLHSSPVTPRWPDVPSANSCYSSPTVHASRYSTGDMYSPLAPRRNSEYEHAQHFPGFAYINGEATTGWAK.

The interval 25–59 (SESKRFSSHSSIGNISNDENEEKENNRASKPHSTP) is disordered. The DNA-binding element occupies 44–126 (NEEKENNRAS…RRLGTRGQSK (83 aa)). The RFX-type winged-helix DNA-binding region spans 61-136 (TLQWLEENYE…YHYYGIAVKE (76 aa)). Residues 315-487 (RFSQILKRQT…NELMRAMKGE (173 aa)) are necessary for dimerization.

This sequence belongs to the RFX family.

The protein localises to the nucleus. May activate transcription by interacting directly with the X-box. The chain is Transcription factor RFX4 (rfx4) from Danio rerio (Zebrafish).